A 792-amino-acid polypeptide reads, in one-letter code: Homeobox protein HAZ1 (792 aa).

The disordered stretch occupies residues 1–154 (MDKTTTSDLV…RPPKGGTPKD (154 aa)). The segment covering 15 to 36 (NIGSNAGSAQEPLTTNGKTSGV) has biased composition (polar residues). A compositionally biased stretch (basic residues) spans 38-49 (NRYKQTVKRGRK). Polar residues predominate over residues 51–67 (SQISPSKTYPLRSSHSN). A compositionally biased stretch (basic residues) spans 95–104 (VAKKRKRSKP). A compositionally biased stretch (basic and acidic residues) spans 116–127 (TSEKKNKAHNEL). Residues 244-301 (DIFCAACGSKDVTLKNDIILCDGICDRGFHQYCLNPPLLAEDIPQGDEGWLCPACDCK) form a PHD-type zinc finger. Disordered stretches follow at residues 338 to 495 (QIDA…NSNL) and 529 to 599 (YGKA…SDQQ). Over residues 345 to 354 (PSDDSADNDY) the composition is skewed to acidic residues. The segment covering 362-371 (HKVDEEKSSG) has biased composition (basic and acidic residues). Acidic residues-rich tracts occupy residues 373–389 (DGGEGLDSDDSSSEDSE) and 433–453 (DESNSDQSDESDFTSDSDDFC). A DNA-binding region (homeobox) is located at residues 610 to 669 (STAKNRHFGPAINQKLKAHFKEDPYPSRATKENLAQELGLTFNQVTKWFSSTRHYARVAA). Disordered stretches follow at residues 677-697 (ENHTAENNNNTNTVDSIQLRG) and 711-792 (SEER…KTGR). Composition is skewed to polar residues over residues 716-737 (GQSNLNEGTPLRSDTSCGQSVA) and 746-760 (NQGNDSSSNVRTPNA). A compositionally biased stretch (basic and acidic residues) spans 774–792 (DEARRKAVQRELRKMKTGR).

It belongs to the PHD-associated homeobox family. As to expression, expressed in roots, leaves, stems, panicle and seeds.

It localises to the nucleus. Its function is as follows. Transcriptional repressor involved in the regulation of gibberrelin (GA) signaling. Binds to the 5'-GATC-3' motif of HD16/EL1 promoter. Functions as a positive regulator of GA signaling by suppressing the expression of HD16/EL1, a negative regulator of GA signaling. The polypeptide is Homeobox protein HAZ1 (Oryza sativa subsp. japonica (Rice)).